The primary structure comprises 307 residues: Zinc-alpha-2-glycoprotein (307 aa).

The first 17 residues, 1-17 (MVPVLLSLPLLLGPAVF), serve as a signal peptide directing secretion. Glutamine 18 bears the Pyrrolidone carboxylic acid mark. Cysteine 118 and cysteine 181 are disulfide-bonded. Asparagine 123, asparagine 190, and asparagine 254 each carry an N-linked (GlcNAc...) asparagine glycan. Residues 202–287 (PTVTITSRVI…DHRGFSQSLS (86 aa)) form the Ig-like C1-type domain. The cysteines at positions 220 and 275 are disulfide-linked.

The protein belongs to the MHC class I family. As to quaternary structure, interacts with PIP.

The protein localises to the secreted. Stimulates lipid degradation in adipocytes and causes the extensive fat losses associated with some advanced cancers. The sequence is that of Zinc-alpha-2-glycoprotein (Azgp1) from Mus musculus (Mouse).